The chain runs to 253 residues: 5-oxoprolinase subunit A (253 aa).

Belongs to the LamB/PxpA family. As to quaternary structure, forms a complex composed of PxpA, PxpB and PxpC.

It carries out the reaction 5-oxo-L-proline + ATP + 2 H2O = L-glutamate + ADP + phosphate + H(+). Functionally, catalyzes the cleavage of 5-oxoproline to form L-glutamate coupled to the hydrolysis of ATP to ADP and inorganic phosphate. The protein is 5-oxoprolinase subunit A of Bacillus cereus (strain B4264).